The primary structure comprises 266 residues: Type II iodothyronine deiodinase (266 aa).

Over 1 to 9 (MGLLSVDLL) the chain is Lumenal. The chain crosses the membrane as a helical; Signal-anchor for type III membrane protein span at residues 10–34 (ITLQILPVFFSNCLFLALYDSVILL). The Cytoplasmic portion of the chain corresponds to 35–266 (KHVALLLSRS…KNFSKRUILD (232 aa)). U130 is a catalytic residue. Residues U130 and U263 are each a non-standard amino acid (selenocysteine).

The protein belongs to the iodothyronine deiodinase family. In terms of assembly, predominantly monomer. Can form homodimers but homodimerization is not essential for enzyme activity. Interacts with USP20 and USP33. Interacts with MARCHF6. In terms of processing, ubiquitinated by MARCHF6, leading to its degradation by the proteasome. Deubiquitinated by USP20 and USP33. Expressed in mammary gland and in brain.

It localises to the endoplasmic reticulum membrane. The enzyme catalyses 3,3',5-triiodo-L-thyronine + iodide + A + H(+) = L-thyroxine + AH2. It catalyses the reaction 3,3'-diiodo-L-thyronine + iodide + A + H(+) = 3,3',5'-triiodo-L-thyronine + AH2. It carries out the reaction 3'-iodo-L-thyronine + iodide + A + H(+) = 3',5'-diiodo-L-thyronine + AH2. The catalysed reaction is 3,3'-diiodothyronamine + iodide + A + H(+) = 3,3',5'-triiodothyronamine + AH2. The enzyme catalyses 3'-iodothyronamine + iodide + A + H(+) = 3',5'-diiodothyronamine + AH2. In terms of biological role, plays a crucial role in the metabolism of thyroid hormones (TH) and has specific roles in TH activation and inactivation by deiodination. Catalyzes the deiodination of L-thyroxine (T4) to 3,5,3'-triiodothyronine (T3) and 3,3',5'-triiodothyronine (rT3) to 3,3'-diiodothyronine (3,3'-T2) via outer-ring deiodination (ORD). Catalyzes the deiodination of 3',5'-diiodothyronine (3',5'-T2) to 3'-monoiodothyronine (3'-T1) via ORD. Catalyzes the phenolic ring deiodinations of 3,3',5'-triiodothyronamine and 3',5'- diiodothyronamine. The polypeptide is Type II iodothyronine deiodinase (Dio2) (Mus musculus (Mouse)).